Reading from the N-terminus, the 501-residue chain is Aldehyde dehydrogenase 1A1 (501 aa).

Serine 2 is subject to N-acetylserine. An N6-acetyllysine mark is found at lysine 91 and lysine 128. NAD(+) contacts are provided by residues 167-170 (IPWN), 193-196 (KPAE), 226-227 (GP), and 246-247 (GS). Lysine 252 carries the N6-acetyllysine modification. The Proton acceptor role is filled by glutamate 269. 269–271 (ELG) contacts NAD(+). Cysteine 303 serves as the catalytic Nucleophile. The mediates interaction with PRMT3 stretch occupies residues 336–501 (LTPGVSQGPQ…VTIKISQKNS (166 aa)). Position 337 is a phosphothreonine (threonine 337). Residue 349-353 (EQYEK) participates in NAD(+) binding. Lysine 353 and lysine 367 each carry N6-acetyllysine. 400–402 (EIF) serves as a coordination point for NAD(+). Lysine 410 is subject to N6-acetyllysine. Serine 413 bears the Phosphoserine mark. N6-acetyllysine occurs at positions 419 and 495.

It belongs to the aldehyde dehydrogenase family. As to quaternary structure, homotetramer. Interacts with PRMT3; the interaction is direct, inhibits ALDH1A1 aldehyde dehydrogenase activity and is independent of the methyltransferase activity of PRMT3. The N-terminus is blocked most probably by acetylation. As to expression, expressed in muscle, liver, small intestine, kidney, brain, lung, heart but not detected in erythrocytes (at protein level).

It is found in the cytoplasm. It localises to the cytosol. The protein resides in the cell projection. Its subcellular location is the axon. It carries out the reaction an aldehyde + NAD(+) + H2O = a carboxylate + NADH + 2 H(+). The enzyme catalyses all-trans-retinal + NAD(+) + H2O = all-trans-retinoate + NADH + 2 H(+). The catalysed reaction is 9-cis-retinal + NAD(+) + H2O = 9-cis-retinoate + NADH + 2 H(+). It catalyses the reaction 11-cis-retinal + NAD(+) + H2O = 11-cis-retinoate + NADH + 2 H(+). It carries out the reaction 13-cis-retinal + NAD(+) + H2O = 13-cis-retinoate + NADH + 2 H(+). The enzyme catalyses 3-deoxyglucosone + NAD(+) + H2O = 2-dehydro-3-deoxy-D-gluconate + NADH + 2 H(+). The catalysed reaction is (E)-4-hydroxynon-2-enal + NAD(+) + H2O = (E)-4-hydroxynon-2-enoate + NADH + 2 H(+). It catalyses the reaction malonaldehyde + NAD(+) + H2O = 3-oxopropanoate + NADH + 2 H(+). It carries out the reaction hexanal + NAD(+) + H2O = hexanoate + NADH + 2 H(+). The enzyme catalyses propanal + NAD(+) + H2O = propanoate + NADH + 2 H(+). The catalysed reaction is acetaldehyde + NAD(+) + H2O = acetate + NADH + 2 H(+). It catalyses the reaction benzaldehyde + NAD(+) + H2O = benzoate + NADH + 2 H(+). It carries out the reaction 4-aminobutanal + NAD(+) + H2O = 4-aminobutanoate + NADH + 2 H(+). Its pathway is cofactor metabolism; retinol metabolism. Functionally, cytosolic dehydrogenase that catalyzes the irreversible oxidation of a wide range of aldehydes to their corresponding carboxylic acid. Functions downstream of retinol dehydrogenases and catalyzes the oxidation of retinaldehyde into retinoic acid, the second step in the oxidation of retinol/vitamin A into retinoic acid. This pathway is crucial to control the levels of retinol and retinoic acid, two important molecules which excess can be teratogenic and cytotoxic. Also oxidizes aldehydes resulting from lipid peroxidation like (E)-4-hydroxynon-2-enal/HNE, malonaldehyde and hexanal that form protein adducts and are highly cytotoxic. By participating for instance to the clearance of (E)-4-hydroxynon-2-enal/HNE in the lens epithelium prevents the formation of HNE-protein adducts and lens opacification. Also functions downstream of fructosamine-3-kinase in the fructosamine degradation pathway by catalyzing the oxidation of 3-deoxyglucosone, the carbohydrate product of fructosamine 3-phosphate decomposition, which is itself a potent glycating agent that may react with lysine and arginine side-chains of proteins. Also has an aminobutyraldehyde dehydrogenase activity and is probably part of an alternative pathway for the biosynthesis of GABA/4-aminobutanoate in midbrain, thereby playing a role in GABAergic synaptic transmission. In Bos taurus (Bovine), this protein is Aldehyde dehydrogenase 1A1.